Consider the following 252-residue polypeptide: Imidazole glycerol phosphate synthase subunit HisF (252 aa).

Active-site residues include aspartate 11 and aspartate 130.

Belongs to the HisA/HisF family. Heterodimer of HisH and HisF.

It localises to the cytoplasm. It catalyses the reaction 5-[(5-phospho-1-deoxy-D-ribulos-1-ylimino)methylamino]-1-(5-phospho-beta-D-ribosyl)imidazole-4-carboxamide + L-glutamine = D-erythro-1-(imidazol-4-yl)glycerol 3-phosphate + 5-amino-1-(5-phospho-beta-D-ribosyl)imidazole-4-carboxamide + L-glutamate + H(+). It functions in the pathway amino-acid biosynthesis; L-histidine biosynthesis; L-histidine from 5-phospho-alpha-D-ribose 1-diphosphate: step 5/9. Its function is as follows. IGPS catalyzes the conversion of PRFAR and glutamine to IGP, AICAR and glutamate. The HisF subunit catalyzes the cyclization activity that produces IGP and AICAR from PRFAR using the ammonia provided by the HisH subunit. The polypeptide is Imidazole glycerol phosphate synthase subunit HisF (Anoxybacillus flavithermus (strain DSM 21510 / WK1)).